The sequence spans 610 residues: Scarecrow-like protein 11 (610 aa).

3 disordered regions span residues N32–V54, Q98–K159, and Q186–N220. Low complexity-rich tracts occupy residues S41–P52 and Q99–D119. Composition is skewed to polar residues over residues P123 to E137 and G209 to N220. The region spanning K215–K598 is the GRAS domain. A leucine repeat I (LRI) region spans residues V222 to P283. Residues Y302–G367 form a VHIID region. Positions L333 to D337 match the VHIID motif. The leucine repeat II (LRII) stretch occupies residues E383–E415. The PFYRE stretch occupies residues T424 to S520. The segment at S523–K598 is SAW.

It belongs to the GRAS family. In terms of tissue distribution, highly expressed in roots and at lower levels in leaves and sepals. Expressed in siliques.

The protein localises to the nucleus. Functionally, probable transcription factor involved in plant development. The sequence is that of Scarecrow-like protein 11 (SCL11) from Arabidopsis thaliana (Mouse-ear cress).